We begin with the raw amino-acid sequence, 93 residues long: Acylphosphatase (93 aa).

Positions 7-93 constitute an Acylphosphatase-like domain; that stretch reads CLKAVISGKV…GEFRAFEILR (87 aa). Residues arginine 22 and asparagine 40 contribute to the active site.

This sequence belongs to the acylphosphatase family.

It catalyses the reaction an acyl phosphate + H2O = a carboxylate + phosphate + H(+). This is Acylphosphatase (acyP) from Acaryochloris marina (strain MBIC 11017).